A 533-amino-acid chain; its full sequence is D-3-phosphoglycerate dehydrogenase (533 aa).

N-acetylalanine is present on alanine 2. The residue at position 14 (serine 14) is a Phosphoserine. N6-acetyllysine; alternate is present on lysine 21. Lysine 21 participates in a covalent cross-link: Glycyl lysine isopeptide (Lys-Gly) (interchain with G-Cter in SUMO1); alternate. Residue lysine 21 forms a Glycyl lysine isopeptide (Lys-Gly) (interchain with G-Cter in SUMO2); alternate linkage. Residue lysine 58 is modified to N6-acetyllysine. Residues threonine 78, 155–156 (RI), aspartate 175, threonine 207, 234–236 (CAR), and aspartate 260 each bind NAD(+). The residue at position 78 (threonine 78) is a Phosphothreonine. The active site involves arginine 236. Glutamate 265 is an active-site residue. The active-site Proton donor is histidine 283. An NAD(+)-binding site is contributed by 283 to 286 (HLGA).

This sequence belongs to the D-isomer specific 2-hydroxyacid dehydrogenase family. Homotetramer. Liver, kidney, brain, testis.

It carries out the reaction (2R)-3-phosphoglycerate + NAD(+) = 3-phosphooxypyruvate + NADH + H(+). The protein operates within amino-acid biosynthesis; L-serine biosynthesis; L-serine from 3-phospho-D-glycerate: step 1/3. Functionally, catalyzes the reversible oxidation of 3-phospho-D-glycerate to 3-phosphonooxypyruvate, the first step of the phosphorylated L-serine biosynthesis pathway. Does not catalyze the reversible oxidation of 2-hydroxyglutarate to 2-oxoglutarate and the reversible oxidation of (S)-malate to oxaloacetate. In Rattus norvegicus (Rat), this protein is D-3-phosphoglycerate dehydrogenase (Phgdh).